The sequence spans 227 residues: UPF0173 metal-dependent hydrolase Bsph_4138 (227 aa).

Belongs to the UPF0173 family.

This Lysinibacillus sphaericus (strain C3-41) protein is UPF0173 metal-dependent hydrolase Bsph_4138.